The chain runs to 97 residues: UPF0213 protein BLi00048/BL00536 (97 aa).

One can recognise a GIY-YIG domain in the interval Asn-4–Arg-79.

This sequence belongs to the UPF0213 family.

In Bacillus licheniformis (strain ATCC 14580 / DSM 13 / JCM 2505 / CCUG 7422 / NBRC 12200 / NCIMB 9375 / NCTC 10341 / NRRL NRS-1264 / Gibson 46), this protein is UPF0213 protein BLi00048/BL00536.